Reading from the N-terminus, the 814-residue chain is MVEKQEEMNEFGAVNGGKVGTSSSVSPPQDKGRKNKRKLADPSPQNAASLTEFPRYELHSFKSQSPLCENDSNGQLKAEESDSVGWDDPFACHLEGLLSSNLLTLFRSAMNQIMDCGYSEDVVLKAISSSRFYCGGTDLVSNIVNDTLSFLKSGKKVAGSRDYVFEDLQQLVAYSLVEKISLVREVRPSLSTDEAMWRLLICDLNVLKAFEVDADGLEGSSVSNASKSSESPVAECNPPKSSDADNPKAPVSNTQSKQSEPVKFGNFANVNNSKNPHASGATPGKEVFSVSTASGEGTKSASLTSVSDEKLVSCRKGRTKKEMAMLRQKSCVEKIRTYSKGGGYKTAKFGGFLVEKRGKSASDLLSAQARNSSSKITTEVMKIPLAESSSTLSNSTKSDSPALDVKEHVTALPANNAPAPVASEKKSGSEPEEKPSVSTKPAPDYYAAIPYDATLGIYIPRNKRDELILKLVPRMKDLQKELQDWTDWANQKVKQATVRLLKDQPELKALRKEKEEAEEFRKEKQLLEENTIKRRSEMELALNNATNQLERTNNTIRRLELEQSLLKREREAANIRASESAESCREAKERVQRLLKNSQSWEGQKNLLQEELKSQRDKVAGLQQEVAKAKTRQNQIEATWKQEKSATGKLTAQAAALKKERGKLEELGKAEEERIKTKAENDVKYYIENIKRLDTEISKLKLKSDSLKIAALKKGIDGNNDGNKSGMNHTTNTKANSMASAKVWENNQGAESKIKRERECVMCLSEEMSVIFLPCAHQVLCSKCNQLHEKEAMEDCPSCRAKIQRRIQARFARG.

Disordered regions lie at residues 1 to 51 (MVEK…ASLT), 221 to 301 (SVSN…TKSA), and 411 to 441 (ALPA…STKP). Over residues 221–231 (SVSNASKSSES) the composition is skewed to low complexity. Polar residues predominate over residues 289–301 (SVSTASGEGTKSA). Positions 423–435 (SEKKSGSEPEEKP) are enriched in basic and acidic residues. Positions 506–710 (ELKALRKEKE…KLKSDSLKIA (205 aa)) form a coiled coil. The RING-type zinc-finger motif lies at 760–800 (CVMCLSEEMSVIFLPCAHQVLCSKCNQLHEKEAMEDCPSCR).

This sequence belongs to the RING-type zinc finger family.

It carries out the reaction S-ubiquitinyl-[E2 ubiquitin-conjugating enzyme]-L-cysteine + [acceptor protein]-L-lysine = [E2 ubiquitin-conjugating enzyme]-L-cysteine + N(6)-ubiquitinyl-[acceptor protein]-L-lysine.. It functions in the pathway protein modification; protein ubiquitination. This is Putative E3 ubiquitin-protein ligase RF298 (RF298) from Arabidopsis thaliana (Mouse-ear cress).